Consider the following 89-residue polypeptide: Phosphocarrier protein HPr (89 aa).

The region spanning 1 to 88 is the HPr domain; that stretch reads MLQRDTTIIN…ALIANRFGEG (88 aa). His-15 acts as the Pros-phosphohistidine intermediate in catalysis.

This sequence belongs to the HPr family.

It is found in the cytoplasm. Functionally, general (non sugar-specific) component of the phosphoenolpyruvate-dependent sugar phosphotransferase system (sugar PTS). This major carbohydrate active-transport system catalyzes the phosphorylation of incoming sugar substrates concomitantly with their translocation across the cell membrane. The phosphoryl group from phosphoenolpyruvate (PEP) is transferred to the phosphoryl carrier protein HPr by enzyme I. Phospho-HPr then transfers it to the PTS EIIA domain. This chain is Phosphocarrier protein HPr (phbH), found in Cupriavidus necator (strain ATCC 17699 / DSM 428 / KCTC 22496 / NCIMB 10442 / H16 / Stanier 337) (Ralstonia eutropha).